A 2415-amino-acid polypeptide reads, in one-letter code: METPKETAVESSGPKVLETAEEIQHRRAEVLNQYQRFKDRVAERGQKLEESYHYQVFRRDADDLEKWIMEKLEIAKDKTYEPTNIQGKYQKHESFVSEVQAKSRVLPELEEIREARFAEDHFAHEATKTHLKQLRLLWDLLLELTQEKSDVLLRALKFYQYSQECEDILEWVKEKEAIVTLVELGDDWERTEVLHKKFEEFQEELTARKGKVDRVNQYANECAQEKHPKLPEIKAKQDEVNAAWDRLWSLALKRRESLSNAADLQRFKRDVNEAIQWMEEKEPQLTSEDYGKDLVSSEALFHNHKRLERNLAVMDDKVKELCAKADKLMISHSADAPQIQQMKLDLVSNWERIRALATNRYAKLKASYGYHRFLSDYDELSGWMKEKTALINADELPTDVASGEALLARHQQHKHEIDSYDDRFQSADATGQELLDGNHEASEEIREKMTILANDWAALLELWDKCQHQYRQCLDFHLFYRDSEQVDSWMSRQEAFLENEDLGNSVGSVEALLQKHDDFEEAFTAQEEKIITLDETATKLIDNDHYDSENIAAIRDGLLARRDALRERAATRRKLLVDSQLLQQLYQDSDDLKTWINKKKKLADDDDYKDVQNLKSRVQKQQDFEEELAVNEIMLNNLEKTGQEMIEDGHYASEAVAARLSEVANLWKELLEATAQKGTQLYEANQLLQFENNAEDLKRWLEEVEWQVTSEDYGKGLADVQNLLRKHGLLESDVTARQNQVDTLTDMAAHFEEIGHPDSGDIRARQESLLSRFEALKEPLAIRKKKLIDLLKLQQICRDSEDEEAWIQETEPSAASTHLGKDLVAAKNLLNRHEVILADIASHEPRIQVITERGNKMVEEGHFAAEDIASRVESLNKNMESLHARAIRRENDLKANVQLQQYLADLHEAEAWIKEKEPIVDNKNYGADEEAAGALLKKHEAFLVDLNAFENSIKALRDQAEVCQQQQAAPVDEAGREARVIALYDFEARSRREVSMKKNDVLTLLSSINKDWWKVEADDHQGFVPAVYVRKLAPDELPGFPQHRQEEPVNIPQLQQQVETLYHSLLDRAEERRRRLLQRYNEFLLAYEAGDMLEWIQEKKTENTGVELDDVWELQKKFDEFQRDLKSNEPRLKDINKVADELLFEELLTPEGAHIRQELNTRWNSLKRLADEQYQLLSSAHAVEMFHREADDVKEQIDKKCRALNAADPGSDLLSVQALQRQHEVFERDIIPLGEKVTTLGETAERLCESHPDATEDLQKQRTELNEAWDTLQGLTSDRKESLNEAHKFFLFLSKASDLENWIKTIGGVISSPELAEDLTGTEILLERHQEHHDDIKREDPTFQALEDFGTELIDSGHRNRREIDNTLQNINSKRDNLEKSWENRKKMLDQCLELQLFRGKCDQVESWMVARENSLRSDDRDHLNSLQALMKKRDDLDKAITAQEGKISDLENVATRLIDNDHYAKEEIAARLQRVLDRWKALKEQLLTELGKLGDYADLKQFYRDLEDLEEWINEMLPIACDESYKDPTNIQRKYLKHQAFENEVNGRAEQVDGVINLGNSLIERRVCDGDEENMQEQLDKLKENWDYLLERTTDKGQKLNEASRQQRFNTSIRDFEFWLSEAEGLLAMKDQARDLTSAGNLLKKHQLLEAEMLAREDPLKDLNDLAQELISSGTFNIDQIEEKMNGVNERFENVQSLAAAHHEKLKETYALFQFFQDLDDEEAWIEEKLLRVSSQDYGRDLQSVQNLLKKHKRLEGELVAHEPAVQNVLDTAESLRDKAAVGKEEIQERLAQFVQHWEKLKELAKTRGVNLEESLEYLQFMENAEEEEAWLGEKCALVSRGDSGDTLAATQSLLKKHEALENDFAVHKNRVQDVCAQGEDILNKEETQNKDKISTKIQVLNEKTASLAKALAAWKSQLDDVHAFQQFNWKADVVESWIGEKEASLKTKSNGADLTAFLTLLAKHDTLDASLQSFQQERLSEIAELKDQLVAGEHSQAKAIEEQHAALLRHWEQLLEASRVHRQKLLEKQLPLQKAEELFMEFAHKASAFNNWCENAEEDLSEPVHCVSLNEIRQLQKEHEAFLASLAGAQEDFNYLLELDKQIKALNVPSSPYTWLTVDVLGRIWNHLPDIIKEREQELQKEEARQIKNFEMCQEFEQNASAFLQWIQETRAYFLDGSLLKETGTLESQLEANKRKQKEIQAMKRHLTKIEDLGDSMEEALILDIKYSTIGLAQQWDQLHQLGMRMQHNLEQQIQAKDTIGVSEETLKEFSTTYKHFDENLTGRLTHKEFRSCLRGLNYYLPMVEEGEPEPKFEKFLNAVDPGRKGYVSLEDYTSFLIDKESENIKTSDDIESAFQALAEGKAYITKEDMKQALTPEQVSFCTIHMQQYMDPRGRSQPAGYDYVGFTNSFFGN.

Spectrin repeat units lie at residues Y52 to L152, K157 to S259, D263 to K365, Y370 to R471, D475 to L576, Q580 to L681, Q686 to L787, K792 to K894, and Q898 to Q967. S257 carries the post-translational modification Phosphoserine. One can recognise an SH3 domain in the interval G975–P1034. S990 carries the post-translational modification Phosphoserine. Spectrin repeat units lie at residues L1085 to L1177, V1183 to E1285, H1287 to D1390, E1394 to T1489, D1499 to E1603, R1606 to E1709, A1712 to E1815, E1818 to D1921, H1924 to E2029, L2040 to Q2142, and M2154 to Q2254. The residue at position 1972 (S1972) is a Phosphoserine. EF-hand domains lie at E2267–Y2302, E2310–E2345, and I2347–S2382. The Ca(2+) site is built by D2280, N2282, T2284, R2286, E2291, D2323, Y2329, and D2334.

Belongs to the spectrin family. Composed of non-homologous chains, alpha and beta, which aggregate to form dimers, tetramers, and higher polymers. Interacts with FASLG. Interacts with BCAM.

Its subcellular location is the cytoplasm. It is found in the cytoskeleton. The protein localises to the cell cortex. Its function is as follows. Spectrin is the major constituent of the cytoskeletal network underlying the erythrocyte plasma membrane. It associates with band 4.1 and actin to form the cytoskeletal superstructure of the erythrocyte plasma membrane. This is Spectrin alpha chain, erythrocytic 1 (Spta1) from Mus musculus (Mouse).